Consider the following 1532-residue polypeptide: IgA-specific serine endopeptidase autotransporter (1532 aa).

An N-terminal signal peptide occupies residues 1–27 (MKAKRFKINAISLSIFLAYALTPYSEA). Residues 28 to 322 (ALVRDDVDYQ…NIYKKEFADK (295 aa)) enclose the Peptidase S6 domain. Ser278 is an active-site residue. Disordered stretches follow at residues 979–1136 (GRPV…KDNS) and 1166–1217 (LEDE…NTEL). The segment covering 989–1004 (AANTASQAQKATQTDG) has biased composition (polar residues). Basic and acidic residues predominate over residues 1045-1101 (EAEKVARQKDEEAKRKAAEIARQQEEARKAAELAAKQKAEAERKARELARQKAEEAS). Basic residues predominate over residues 1107-1116 (KPKRRRRRAI). Basic and acidic residues predominate over residues 1207–1217 (SDKHPQDNTEL). One can recognise an Autotransporter domain in the interval 1280 to 1532 (ADAEKNSVWM…SGQIKIQIRF (253 aa)).

The protein resides in the periplasm. It is found in the secreted. The protein localises to the cell surface. It localises to the cell outer membrane. The enzyme catalyses Cleavage of immunoglobulin A molecules at certain Pro-|-Xaa bonds in the hinge region. No small molecule substrates are known.. This protease is specific for immunoglobulin A. This chain is IgA-specific serine endopeptidase autotransporter (iga), found in Neisseria gonorrhoeae.